We begin with the raw amino-acid sequence, 1036 residues long: Exportin-T (1036 aa).

The protein belongs to the exportin family.

The protein localises to the nucleus. The protein resides in the cytoplasm. Functionally, tRNA nucleus export receptor which facilitates tRNA translocation across the nuclear pore complex. Involved in pre-tRNA splicing, probably by affecting the interaction of pre-tRNA with splicing endonuclease. This Phaeosphaeria nodorum (strain SN15 / ATCC MYA-4574 / FGSC 10173) (Glume blotch fungus) protein is Exportin-T (LOS1).